The primary structure comprises 173 residues: Protein tyrosine phosphatase type IVA 3 (173 aa).

The Tyrosine-protein phosphatase domain occupies 8 to 161 (APVEVSYKNM…YRPKQRLRFK (154 aa)). A disulfide bridge links C49 with C104. D72 serves as the catalytic Proton donor. C104 acts as the Phosphocysteine intermediate in catalysis. R110 serves as a coordination point for substrate. Position 170 is a cysteine methyl ester (C170). C170 carries S-farnesyl cysteine lipidation. A propeptide spans 171-173 (CIM) (removed in mature form).

This sequence belongs to the protein-tyrosine phosphatase family. In terms of assembly, interacts with tubulin. Farnesylated. Farnesylation is required for membrane targeting. Unfarnesylated forms are shifted into the nucleus.

It localises to the cell membrane. The protein resides in the early endosome. It catalyses the reaction O-phospho-L-tyrosyl-[protein] + H2O = L-tyrosyl-[protein] + phosphate. With respect to regulation, inhibited by sodium orthovanadate and peroxovanadium compounds, and by pentamidine. Protein tyrosine phosphatase which stimulates progression from G1 into S phase during mitosis. Enhances cell proliferation, cell motility and invasive activity, and promotes cancer metastasis. May be involved in the progression of cardiac hypertrophy by inhibiting intracellular calcium mobilization in response to angiotensin II. In Bos taurus (Bovine), this protein is Protein tyrosine phosphatase type IVA 3 (PTP4A3).